A 261-amino-acid chain; its full sequence is Yop proteins translocation protein T (261 aa).

The next 7 membrane-spanning stretches (helical) occupy residues 20–40 (FMAC…GVLL), 44–64 (IVCS…YIEV), 77–97 (IILG…LESA), 131–151 (TLIT…ALFH), 180–200 (ILLI…LAEF), 214–234 (VFVL…VIYC), and 239–259 (SHAS…IPVL).

It belongs to the FliR/MopE/SpaR family.

The protein resides in the cell membrane. Its function is as follows. Component of the yop secretion machinery. The chain is Yop proteins translocation protein T (yscT) from Yersinia pestis.